Here is a 364-residue protein sequence, read N- to C-terminus: Chorismate synthase (364 aa).

2 residues coordinate NADP(+): Arg-48 and Arg-54. FMN-binding positions include 125 to 127 (RSS), 238 to 239 (NA), Gly-278, 293 to 297 (KPTSS), and Arg-319.

Belongs to the chorismate synthase family. Homotetramer. The cofactor is FMNH2.

The enzyme catalyses 5-O-(1-carboxyvinyl)-3-phosphoshikimate = chorismate + phosphate. It participates in metabolic intermediate biosynthesis; chorismate biosynthesis; chorismate from D-erythrose 4-phosphate and phosphoenolpyruvate: step 7/7. In terms of biological role, catalyzes the anti-1,4-elimination of the C-3 phosphate and the C-6 proR hydrogen from 5-enolpyruvylshikimate-3-phosphate (EPSP) to yield chorismate, which is the branch point compound that serves as the starting substrate for the three terminal pathways of aromatic amino acid biosynthesis. This reaction introduces a second double bond into the aromatic ring system. The chain is Chorismate synthase from Shewanella loihica (strain ATCC BAA-1088 / PV-4).